The primary structure comprises 175 residues: Shikimate kinase (175 aa).

An ATP-binding site is contributed by 10–15; the sequence is GAGKTT. Thr-14 contacts Mg(2+). Positions 32, 56, and 78 each coordinate substrate. Arg-116 is a binding site for ATP. Residue Arg-135 coordinates substrate.

This sequence belongs to the shikimate kinase family. As to quaternary structure, monomer. Requires Mg(2+) as cofactor.

The protein resides in the cytoplasm. It carries out the reaction shikimate + ATP = 3-phosphoshikimate + ADP + H(+). The protein operates within metabolic intermediate biosynthesis; chorismate biosynthesis; chorismate from D-erythrose 4-phosphate and phosphoenolpyruvate: step 5/7. Functionally, catalyzes the specific phosphorylation of the 3-hydroxyl group of shikimic acid using ATP as a cosubstrate. The polypeptide is Shikimate kinase (Aromatoleum aromaticum (strain DSM 19018 / LMG 30748 / EbN1) (Azoarcus sp. (strain EbN1))).